Consider the following 187-residue polypeptide: Auxin-binding protein T85 (187 aa).

An N-terminal signal peptide occupies residues 1 to 20 (MARHVLVVVAVLLFATAEAS). Cys-22 and Cys-177 form a disulfide bridge. The Zn(2+) site is built by His-78, His-80, and Glu-84. An N-linked (GlcNAc...) asparagine glycan is attached at Asn-117. Zn(2+) is bound at residue His-128. The Prevents secretion from ER motif lies at 184–187 (KDEL).

In terms of assembly, homodimer.

The protein localises to the endoplasmic reticulum lumen. Functionally, this is probably a receptor for the plant hormone auxin. The sequence is that of Auxin-binding protein T85 (T85) from Nicotiana tabacum (Common tobacco).